A 427-amino-acid chain; its full sequence is Enolase (427 aa).

A (2R)-2-phosphoglycerate-binding site is contributed by Q163. E205 (proton donor) is an active-site residue. The Mg(2+) site is built by D242, E285, and D312. Positions 337, 366, 367, and 388 each coordinate (2R)-2-phosphoglycerate. K337 functions as the Proton acceptor in the catalytic mechanism.

This sequence belongs to the enolase family. Mg(2+) serves as cofactor.

The protein resides in the cytoplasm. It localises to the secreted. The protein localises to the cell surface. It carries out the reaction (2R)-2-phosphoglycerate = phosphoenolpyruvate + H2O. Its pathway is carbohydrate degradation; glycolysis; pyruvate from D-glyceraldehyde 3-phosphate: step 4/5. Functionally, catalyzes the reversible conversion of 2-phosphoglycerate (2-PG) into phosphoenolpyruvate (PEP). It is essential for the degradation of carbohydrates via glycolysis. The polypeptide is Enolase (Dechloromonas aromatica (strain RCB)).